A 74-amino-acid polypeptide reads, in one-letter code: Exodeoxyribonuclease 7 small subunit (74 aa).

The protein belongs to the XseB family. Heterooligomer composed of large and small subunits.

The protein localises to the cytoplasm. It catalyses the reaction Exonucleolytic cleavage in either 5'- to 3'- or 3'- to 5'-direction to yield nucleoside 5'-phosphates.. Its function is as follows. Bidirectionally degrades single-stranded DNA into large acid-insoluble oligonucleotides, which are then degraded further into small acid-soluble oligonucleotides. The chain is Exodeoxyribonuclease 7 small subunit from Vesicomyosocius okutanii subsp. Calyptogena okutanii (strain HA).